A 286-amino-acid polypeptide reads, in one-letter code: Phosphate import ATP-binding protein PstB (286 aa).

The 242-residue stretch at 40–281 (VVARDFSIYY…PKDSMTEDYI (242 aa)) folds into the ABC transporter domain. Position 72–79 (72–79 (GPSGCGKS)) interacts with ATP.

The protein belongs to the ABC transporter superfamily. Phosphate importer (TC 3.A.1.7) family. As to quaternary structure, the complex is composed of two ATP-binding proteins (PstB), two transmembrane proteins (PstC and PstA) and a solute-binding protein (PstS).

The protein localises to the cell inner membrane. It carries out the reaction phosphate(out) + ATP + H2O = ADP + 2 phosphate(in) + H(+). Functionally, part of the ABC transporter complex PstSACB involved in phosphate import. Responsible for energy coupling to the transport system. The chain is Phosphate import ATP-binding protein PstB from Chlorobaculum tepidum (strain ATCC 49652 / DSM 12025 / NBRC 103806 / TLS) (Chlorobium tepidum).